The primary structure comprises 523 residues: NEDD8-activating enzyme E1 regulatory subunit AXL (523 aa).

It belongs to the ubiquitin-activating E1 family. ULA1 subfamily. In terms of assembly, heterodimer of ECR1 and AXL1. The complex binds to RUB1/NEDD8 and RCE1.

It is found in the nucleus. It participates in protein modification; protein neddylation. In terms of biological role, regulatory subunit of the dimeric ECR1-AXL1 E1 enzyme. E1 activates RUB1/NEDD8 by first adenylating its C-terminal glycine residue with ATP, thereafter linking this residue to the side chain of the catalytic cysteine, yielding a RUB1-ECR1 thioester and free AMP. E1 finally transfers RUB1 to the catalytic cysteine of RCE1. May function redundantly with AXR1 in the RUB conjugating pathway. Seems not to be functionally equivalent to AXR1 in vivo. This Arabidopsis thaliana (Mouse-ear cress) protein is NEDD8-activating enzyme E1 regulatory subunit AXL.